The sequence spans 504 residues: Cytochrome P450 monooxygenase gliF (504 aa).

Residues 13–31 form a helical membrane-spanning segment; that stretch reads AVAVSFGVGLLYWVYRLLL. Residues Asn197 and Asn299 are each glycosylated (N-linked (GlcNAc...) asparagine). A heme-binding site is contributed by Cys449.

The protein belongs to the cytochrome P450 family. Heme serves as cofactor.

Its subcellular location is the membrane. The protein operates within mycotoxin biosynthesis. Functionally, cytochrome P450 monooxygenase; part of the gene cluster that mediates the biosynthesis of gliotoxin, a member of the epipolythiodioxopiperazine (ETP) class of toxins characterized by a disulfide bridged cyclic dipeptide. The first step in gliotoxin biosynthesis is the condensation of serine and phenylalanine to form the cyclo-L-phenylalanyl-L-serine diketopiperazine (DKP) by the NRPS gliP. GliP is also able to produce the DKP cyclo-L-tryptophanyl-L-serine, suggesting that the substrate specificity of the first adenylation (A) domain in gliP is sufficiently relaxed to accommodate both L-Phe and L-Trp. The cytochrome P450 monooxygenase gliC has been shown to catalyze the subsequent hydroxylation of the alpha-carbon of L-Phe in cyclo-L-phenylalanyl-L-serine whereas the second cytochrome P450 enzyme, gliF, is presumably involved in the modification of the DKP side chain. The glutathione S-transferase (GST) gliG then forms a bis-glutathionylated biosynthetic intermediate which is responsible for the sulfurization of gliotoxin. This bis-glutathionylated intermediate is subsequently processed by the gamma-glutamyl cyclotransferase gliK to remove both gamma-glutamyl moieties. Subsequent processing via gliI yields a biosynthetic intermediate, which is N-methylated via the N-methyltransferase gliN, before the gliotoxin oxidoreductase gliT-mediated disulfide bridge closure. GliN-mediated amide methylation confers stability to ETP, damping the spontaneous formation of tri- and tetrasulfides. Intracellular dithiol gliotoxin oxidized by gliT is subsequently effluxed by gliA. Gliotoxin contributes to pathogenesis during invasive aspergillosis. In macrophages and neutrophils, gliotoxin showed inhibition of various different cell functions including cytokine production, antigen presentation, phagocytosis, and production of reactive oxygen species. This chain is Cytochrome P450 monooxygenase gliF, found in Aspergillus fumigatus (strain ATCC MYA-4609 / CBS 101355 / FGSC A1100 / Af293) (Neosartorya fumigata).